The following is a 174-amino-acid chain: MGREGWSRVLSATGENRERSLQKFMTETLTQLGQMVGLPASPEVAVLETFDNPHPDRQYLVRFVAPEFTSLCPLTGQPDFAHLVLDYVPDQRLVESKSLKLFLGSFRNHGAFHENCTLTIAKRLEEAMNPTWLRLGGYWYPRGGLPIDVFYQSGEPPAGVWVPEQGVAPYRGRG.

Residue cysteine 72 is the Thioimide intermediate of the active site. Residue aspartate 79 is the Proton donor of the active site. Residues 94 to 96 and 113 to 114 contribute to the substrate site; these read VES and HE.

This sequence belongs to the GTP cyclohydrolase I family. QueF type 1 subfamily.

It is found in the cytoplasm. The catalysed reaction is 7-aminomethyl-7-carbaguanine + 2 NADP(+) = 7-cyano-7-deazaguanine + 2 NADPH + 3 H(+). It functions in the pathway tRNA modification; tRNA-queuosine biosynthesis. Catalyzes the NADPH-dependent reduction of 7-cyano-7-deazaguanine (preQ0) to 7-aminomethyl-7-deazaguanine (preQ1). The polypeptide is NADPH-dependent 7-cyano-7-deazaguanine reductase (Synechococcus elongatus (strain ATCC 33912 / PCC 7942 / FACHB-805) (Anacystis nidulans R2)).